The following is a 322-amino-acid chain: MTAWQKIQKIAPAAIGACLFVLSIGAINSELHHYGWQNVLASFQGIVKTRLAGAFALMLINYIILTGYDTLAMFYLGQSLPLTKTSFVGFVSYAISNSVGLALLSGSAIRYRLYQSWQVSAPIIAQAIAFCNLSFWVGLLTVGGITFVVDPLQLPAFLHLPFLSVHPIGFTFLAIIGIYLLITGNLIKPFKIGQWQTPKIPFAVSLAQIGLTAVDWILASGILYVLLPGHHHLSFPGFFGIYLLAQVAGIISNVPGGLGVFETVVLFLLTPKYSSVQVLGALLAYRVIYYWIPLGSASLSLGAFELLQHRRERRQKSGSESE.

8 helical membrane passes run 7–27 (IQKI…IGAI), 54–74 (AFAL…LAMF), 87–107 (FVGF…LSGS), 128–148 (IAFC…ITFV), 162–182 (FLSV…YLLI), 209–229 (IGLT…LLPG), 249–269 (GIIS…LFLL), and 287–307 (VIYY…FELL).

It to E.coli YbhN.

Its subcellular location is the cell membrane. This is an uncharacterized protein from Synechocystis sp. (strain ATCC 27184 / PCC 6803 / Kazusa).